We begin with the raw amino-acid sequence, 221 residues long: Deoxyribose-phosphate aldolase (221 aa).

Asp90 acts as the Proton donor/acceptor in catalysis. Lys152 acts as the Schiff-base intermediate with acetaldehyde in catalysis. Lys181 (proton donor/acceptor) is an active-site residue.

The protein belongs to the DeoC/FbaB aldolase family. DeoC type 1 subfamily.

Its subcellular location is the cytoplasm. It carries out the reaction 2-deoxy-D-ribose 5-phosphate = D-glyceraldehyde 3-phosphate + acetaldehyde. It participates in carbohydrate degradation; 2-deoxy-D-ribose 1-phosphate degradation; D-glyceraldehyde 3-phosphate and acetaldehyde from 2-deoxy-alpha-D-ribose 1-phosphate: step 2/2. Catalyzes a reversible aldol reaction between acetaldehyde and D-glyceraldehyde 3-phosphate to generate 2-deoxy-D-ribose 5-phosphate. The protein is Deoxyribose-phosphate aldolase of Syntrophotalea carbinolica (strain DSM 2380 / NBRC 103641 / GraBd1) (Pelobacter carbinolicus).